The chain runs to 198 residues: Holliday junction branch migration complex subunit RuvA (198 aa).

A domain I region spans residues 1 to 63 (MYDYIKGQLT…EDAHLLFGFH (63 aa)). The domain II stretch occupies residues 64–142 (TEDEKDVFLK…EAPQETGHTK (79 aa)). The flexible linker stretch occupies residues 143–147 (ARSNK). The tract at residues 148 to 198 (AGNTQLDEAIEALLALGYTATELKKIRAFFEGTSETAEQYIKSALKLLMKG) is domain III.

This sequence belongs to the RuvA family. In terms of assembly, homotetramer. Forms an RuvA(8)-RuvB(12)-Holliday junction (HJ) complex. HJ DNA is sandwiched between 2 RuvA tetramers; dsDNA enters through RuvA and exits via RuvB. An RuvB hexamer assembles on each DNA strand where it exits the tetramer. Each RuvB hexamer is contacted by two RuvA subunits (via domain III) on 2 adjacent RuvB subunits; this complex drives branch migration. In the full resolvosome a probable DNA-RuvA(4)-RuvB(12)-RuvC(2) complex forms which resolves the HJ.

The protein localises to the cytoplasm. Its function is as follows. The RuvA-RuvB-RuvC complex processes Holliday junction (HJ) DNA during genetic recombination and DNA repair, while the RuvA-RuvB complex plays an important role in the rescue of blocked DNA replication forks via replication fork reversal (RFR). RuvA specifically binds to HJ cruciform DNA, conferring on it an open structure. The RuvB hexamer acts as an ATP-dependent pump, pulling dsDNA into and through the RuvAB complex. HJ branch migration allows RuvC to scan DNA until it finds its consensus sequence, where it cleaves and resolves the cruciform DNA. The sequence is that of Holliday junction branch migration complex subunit RuvA from Streptococcus pyogenes serotype M49 (strain NZ131).